The primary structure comprises 209 residues: MKVVEISHPMVKHKLGLMRAASISTQEFRRLTKEITSLLTYEVTAGFELEKTEILGWQGENIEIDQIKGKKLTVVPILRAGLGMMDGVFEHVPAAKVSMVGMYRDEKTAKPVAYFAKLCDKLDERVALIVDPMLATGGSMIATVSLLKKAGSKDIKIITLVSAPEGIDALAKAHPDVELYTASIDSHLNDKKYIIPGLGDAGDKIFGTK.

Residues Arg-79, Arg-104, and 131–139 (DPMLATGGS) contribute to the 5-phospho-alpha-D-ribose 1-diphosphate site. Uracil contacts are provided by residues Ile-194 and 199-201 (GDA). Asp-200 contributes to the 5-phospho-alpha-D-ribose 1-diphosphate binding site.

It belongs to the UPRTase family. Mg(2+) serves as cofactor.

The enzyme catalyses UMP + diphosphate = 5-phospho-alpha-D-ribose 1-diphosphate + uracil. Its pathway is pyrimidine metabolism; UMP biosynthesis via salvage pathway; UMP from uracil: step 1/1. Its activity is regulated as follows. Allosterically activated by GTP. Its function is as follows. Catalyzes the conversion of uracil and 5-phospho-alpha-D-ribose 1-diphosphate (PRPP) to UMP and diphosphate. The chain is Uracil phosphoribosyltransferase from Francisella tularensis subsp. novicida (strain U112).